We begin with the raw amino-acid sequence, 345 residues long: Nicotinate-nucleotide--dimethylbenzimidazole phosphoribosyltransferase (345 aa).

Glutamate 312 functions as the Proton acceptor in the catalytic mechanism.

Belongs to the CobT family.

The catalysed reaction is 5,6-dimethylbenzimidazole + nicotinate beta-D-ribonucleotide = alpha-ribazole 5'-phosphate + nicotinate + H(+). It functions in the pathway nucleoside biosynthesis; alpha-ribazole biosynthesis; alpha-ribazole from 5,6-dimethylbenzimidazole: step 1/2. In terms of biological role, catalyzes the synthesis of alpha-ribazole-5'-phosphate from nicotinate mononucleotide (NAMN) and 5,6-dimethylbenzimidazole (DMB). In Phocaeicola vulgatus (strain ATCC 8482 / DSM 1447 / JCM 5826 / CCUG 4940 / NBRC 14291 / NCTC 11154) (Bacteroides vulgatus), this protein is Nicotinate-nucleotide--dimethylbenzimidazole phosphoribosyltransferase.